We begin with the raw amino-acid sequence, 264 residues long: MKKLKLHGFNNLTKSLSFCIYDICYAKTAEERDGYIAYIDELYNANRLTEILSETCSIIGANILNIARQDYEPQGASVTILVSEEPVDPQLIDKTEHPGPLPEAVVAHLDKSHICVHTYPESHPEGGLCTFRADIEVSTCGVISPLKALNYLIHQLESDIVTIDYRVRGFTRDVNGMKHFIDHEINSIQNFMSDDMKSLYDMVDVNVYQENIFHTKMLLKEFDLKHYMFHTKPEDLTETERKEITAALWKEMREIYYGRNIPAV.

Ser-112 serves as the catalytic Schiff-base intermediate with substrate; via pyruvic acid. Ser-112 bears the Pyruvic acid (Ser); by autocatalysis mark. Catalysis depends on His-117, which acts as the Proton acceptor; for processing activity. Catalysis depends on Cys-140, which acts as the Proton donor; for catalytic activity.

Belongs to the prokaryotic AdoMetDC family. Type 2 subfamily. In terms of assembly, heterooctamer of four alpha and four beta chains arranged as a tetramer of alpha/beta heterodimers. It depends on pyruvate as a cofactor. Is synthesized initially as an inactive proenzyme. Formation of the active enzyme involves a self-maturation process in which the active site pyruvoyl group is generated from an internal serine residue via an autocatalytic post-translational modification. Two non-identical subunits are generated from the proenzyme in this reaction, and the pyruvate is formed at the N-terminus of the alpha chain, which is derived from the carboxyl end of the proenzyme. The post-translation cleavage follows an unusual pathway, termed non-hydrolytic serinolysis, in which the side chain hydroxyl group of the serine supplies its oxygen atom to form the C-terminus of the beta chain, while the remainder of the serine residue undergoes an oxidative deamination to produce ammonia and the pyruvoyl group blocking the N-terminus of the alpha chain.

It catalyses the reaction S-adenosyl-L-methionine + H(+) = S-adenosyl 3-(methylsulfanyl)propylamine + CO2. It functions in the pathway amine and polyamine biosynthesis; S-adenosylmethioninamine biosynthesis; S-adenosylmethioninamine from S-adenosyl-L-methionine: step 1/1. Catalyzes the decarboxylation of S-adenosylmethionine to S-adenosylmethioninamine (dcAdoMet), the propylamine donor required for the synthesis of the polyamines spermine and spermidine from the diamine putrescine. The protein is S-adenosylmethionine decarboxylase proenzyme of Citrobacter koseri (strain ATCC BAA-895 / CDC 4225-83 / SGSC4696).